The chain runs to 498 residues: Glycerol kinase (498 aa).

Residue threonine 12 participates in ADP binding. Threonine 12, threonine 13, and serine 14 together coordinate ATP. Residue threonine 12 participates in sn-glycerol 3-phosphate binding. Arginine 16 is an ADP binding site. Sn-glycerol 3-phosphate-binding residues include arginine 82, glutamate 83, and tyrosine 134. Residues arginine 82, glutamate 83, and tyrosine 134 each coordinate glycerol. A Phosphohistidine; by HPr modification is found at histidine 230. Position 244 (aspartate 244) interacts with sn-glycerol 3-phosphate. Glycerol is bound by residues aspartate 244 and glutamine 245. ADP is bound by residues threonine 266 and glycine 309. Residues threonine 266, glycine 309, glutamine 313, and glycine 410 each contribute to the ATP site. Residues glycine 410 and asparagine 414 each coordinate ADP.

The protein belongs to the FGGY kinase family. In terms of assembly, homotetramer and homodimer (in equilibrium). Post-translationally, the phosphoenolpyruvate-dependent sugar phosphotransferase system (PTS), including enzyme I, and histidine-containing protein (HPr) are required for the phosphorylation, which leads to the activation of the enzyme.

The enzyme catalyses glycerol + ATP = sn-glycerol 3-phosphate + ADP + H(+). Its pathway is polyol metabolism; glycerol degradation via glycerol kinase pathway; sn-glycerol 3-phosphate from glycerol: step 1/1. Its activity is regulated as follows. Activated by phosphorylation and inhibited by fructose 1,6-bisphosphate (FBP). In terms of biological role, key enzyme in the regulation of glycerol uptake and metabolism. Catalyzes the phosphorylation of glycerol to yield sn-glycerol 3-phosphate. The polypeptide is Glycerol kinase (Staphylococcus aureus (strain MRSA252)).